The sequence spans 418 residues: Glutamyl-tRNA reductase (418 aa).

Residues 49-52 (TCNR), Ser109, 114-116 (EPQ), and Gln120 each bind substrate. Residue Cys50 is the Nucleophile of the active site. 189–194 (GAGETI) contacts NADP(+).

This sequence belongs to the glutamyl-tRNA reductase family. Homodimer.

It carries out the reaction (S)-4-amino-5-oxopentanoate + tRNA(Glu) + NADP(+) = L-glutamyl-tRNA(Glu) + NADPH + H(+). It participates in porphyrin-containing compound metabolism; protoporphyrin-IX biosynthesis; 5-aminolevulinate from L-glutamyl-tRNA(Glu): step 1/2. In terms of biological role, catalyzes the NADPH-dependent reduction of glutamyl-tRNA(Glu) to glutamate 1-semialdehyde (GSA). The polypeptide is Glutamyl-tRNA reductase (Shigella dysenteriae serotype 1 (strain Sd197)).